The primary structure comprises 546 residues: Probable protein kinase UbiB (546 aa).

One can recognise a Protein kinase domain in the interval 123–501 (DFDETPLASA…SRRQGQARYL (379 aa)). ATP contacts are provided by residues 129–137 (LASASIAQV) and K152. Catalysis depends on D287, which acts as the Proton acceptor. Transmembrane regions (helical) follow at residues 496 to 516 (GQAR…VFLL) and 521 to 541 (HIEW…LGWF).

The protein belongs to the ABC1 family. UbiB subfamily.

It is found in the cell inner membrane. It functions in the pathway cofactor biosynthesis; ubiquinone biosynthesis [regulation]. Is probably a protein kinase regulator of UbiI activity which is involved in aerobic coenzyme Q (ubiquinone) biosynthesis. This is Probable protein kinase UbiB from Aeromonas salmonicida (strain A449).